A 375-amino-acid chain; its full sequence is MSCPVIELTQQLIRRPSLSPDDAGCQALLIERLQAIGFTVERMDFADTQNFWAWRGQGETLAFAGHTDVVPPGDADRWINPPFEPTIRDGMLFGRGAADMKGSLAAMVVAAERFVAQHPNHAGRLAFLITSDEEASAHNGTVKVVEALMARNERLDYCLVGEPSSIEVVGDVVKNGRRGSLTCNLTIHGVQGHVAYPHLADNPVHRAAPFLNELVAIEWDQGNEFFPATSMQIANIQAGTGSNNVIPGELFVQFNFRFSTELTDEMIKAQVLALLEKHQLRYTVEWWLSGQPFLTARGKLVDAVVNAVEHYNEIKPQLLTTGGTSDGRFIARMGAQVVELGPVNATIHKINECVNAADLQLLARMYQRIMEQLVA.

Zn(2+) is bound at residue histidine 66. The active site involves aspartate 68. Aspartate 99 lines the Zn(2+) pocket. Glutamate 133 (proton acceptor) is an active-site residue. Positions 134, 162, and 348 each coordinate Zn(2+).

It belongs to the peptidase M20A family. DapE subfamily. As to quaternary structure, homodimer. It depends on Zn(2+) as a cofactor. The cofactor is Co(2+).

The enzyme catalyses N-succinyl-(2S,6S)-2,6-diaminopimelate + H2O = (2S,6S)-2,6-diaminopimelate + succinate. Its pathway is amino-acid biosynthesis; L-lysine biosynthesis via DAP pathway; LL-2,6-diaminopimelate from (S)-tetrahydrodipicolinate (succinylase route): step 3/3. Functionally, catalyzes the hydrolysis of N-succinyl-L,L-diaminopimelic acid (SDAP), forming succinate and LL-2,6-diaminopimelate (DAP), an intermediate involved in the bacterial biosynthesis of lysine and meso-diaminopimelic acid, an essential component of bacterial cell walls. The sequence is that of Succinyl-diaminopimelate desuccinylase from Escherichia coli O17:K52:H18 (strain UMN026 / ExPEC).